A 126-amino-acid polypeptide reads, in one-letter code: Holo-[acyl-carrier-protein] synthase (126 aa).

Positions 8 and 57 each coordinate Mg(2+).

The protein belongs to the P-Pant transferase superfamily. AcpS family. Mg(2+) is required as a cofactor.

The protein resides in the cytoplasm. It carries out the reaction apo-[ACP] + CoA = holo-[ACP] + adenosine 3',5'-bisphosphate + H(+). Transfers the 4'-phosphopantetheine moiety from coenzyme A to a Ser of acyl-carrier-protein. This is Holo-[acyl-carrier-protein] synthase from Halorhodospira halophila (strain DSM 244 / SL1) (Ectothiorhodospira halophila (strain DSM 244 / SL1)).